Here is a 124-residue protein sequence, read N- to C-terminus: MAAYLLAVAILFCIQGWPSGTVQGQAMPFMEVYTRSACQTRETLVSILEEHPHEISHLFKPSCVTVLRCGGCCSDESLTCTSTGKRSVGREIMRVDPHKETSKIEVMQFTEHTDCECRPQSASG.

Residues 1-24 form the signal peptide; the sequence is MAAYLLAVAILFCIQGWPSGTVQG. Residue Gln25 is modified to Pyrrolidone carboxylic acid. Intrachain disulfides connect Cys38/Cys80, Cys69/Cys115, and Cys73/Cys117.

The protein belongs to the PDGF/VEGF growth factor family. Snake venom VEGF subfamily. As to quaternary structure, homodimer; disulfide-linked. Interacts with VEGF receptor-1 (FLT1) with a high affinity, whereas it binds to VEGF receptor-2 (KDR) with a low affinity. Does not bind VEGF receptor-3 (FLT4). Expressed by the venom gland.

The protein localises to the secreted. Functionally, snake venom VEGFs that may contribute to venom dispersion and prey subjugation by inducing vascular permeability and hypotension. This protein induces an increase in capillary permeability after intradermal injection, as well as a drastic hypotensive effect after intravenous injection. The hypotension is mediated by nitric oxide (NO), which is produced by VEGF-activated endothelium NO synthase. Also induces angiogenesis in vitro. Like other crotalid VEGFs, this protein interacts with VEGF receptor-1 (FLT1) with a high affinity, whereas it binds to VEGF receptor-2 (KDR) with a low affinity. This chain is Snake venom vascular endothelial growth factor toxin apiscin, found in Agkistrodon piscivorus piscivorus (Eastern cottonmouth).